A 173-amino-acid polypeptide reads, in one-letter code: MNRQSSEKLKKTCAWFIHLIASMCGTGLLGLFVTNVTLYRQIKICGNREGMSGWVQINNNCYTMVENITFDELIGHCTKHDSIIPNALDQSEVLIVSSVLGVKDHWMPFTKKSRNWFHGKLPVNIKGDGDKREELGKPRKPDKSEKCTIYYDNGIIEENCNKKHTGICFSPFF.

The C-type lectin domain occupies 50-169; the sequence is GMSGWVQINN…CNKKHTGICF (120 aa).

The polypeptide is Putative C-type lectin protein FPV198 (Vertebrata (FPV)).